Consider the following 345-residue polypeptide: Uroporphyrinogen decarboxylase (345 aa).

Residues 28 to 32 (RQAGR), Asp77, Tyr153, Ser208, and His322 each bind substrate.

This sequence belongs to the uroporphyrinogen decarboxylase family. In terms of assembly, homodimer.

Its subcellular location is the cytoplasm. The enzyme catalyses uroporphyrinogen III + 4 H(+) = coproporphyrinogen III + 4 CO2. It participates in porphyrin-containing compound metabolism; protoporphyrin-IX biosynthesis; coproporphyrinogen-III from 5-aminolevulinate: step 4/4. Its function is as follows. Catalyzes the decarboxylation of four acetate groups of uroporphyrinogen-III to yield coproporphyrinogen-III. In Solibacter usitatus (strain Ellin6076), this protein is Uroporphyrinogen decarboxylase.